The following is a 305-amino-acid chain: UDP-3-O-acyl-N-acetylglucosamine deacetylase (305 aa).

Positions 79, 238, and 242 each coordinate Zn(2+). H265 acts as the Proton donor in catalysis.

The protein belongs to the LpxC family. The cofactor is Zn(2+).

The enzyme catalyses a UDP-3-O-[(3R)-3-hydroxyacyl]-N-acetyl-alpha-D-glucosamine + H2O = a UDP-3-O-[(3R)-3-hydroxyacyl]-alpha-D-glucosamine + acetate. It participates in glycolipid biosynthesis; lipid IV(A) biosynthesis; lipid IV(A) from (3R)-3-hydroxytetradecanoyl-[acyl-carrier-protein] and UDP-N-acetyl-alpha-D-glucosamine: step 2/6. Catalyzes the hydrolysis of UDP-3-O-myristoyl-N-acetylglucosamine to form UDP-3-O-myristoylglucosamine and acetate, the committed step in lipid A biosynthesis. This chain is UDP-3-O-acyl-N-acetylglucosamine deacetylase, found in Shigella boydii serotype 4 (strain Sb227).